Reading from the N-terminus, the 860-residue chain is Leucine--tRNA ligase (860 aa).

Positions 42-52 (PYPSGRLHMGH) match the 'HIGH' region motif. Positions 619–623 (KMSKS) match the 'KMSKS' region motif. Lys-622 provides a ligand contact to ATP.

The protein belongs to the class-I aminoacyl-tRNA synthetase family.

Its subcellular location is the cytoplasm. It catalyses the reaction tRNA(Leu) + L-leucine + ATP = L-leucyl-tRNA(Leu) + AMP + diphosphate. In Yersinia pseudotuberculosis serotype O:3 (strain YPIII), this protein is Leucine--tRNA ligase.